The chain runs to 146 residues: Hemoglobin subunit beta (146 aa).

The 145-residue stretch at 2–146 folds into the Globin domain; sequence HWTAEEKQLI…VAHALARKYH (145 aa). Residues His-63 and His-92 each contribute to the heme b site.

This sequence belongs to the globin family. As to quaternary structure, heterotetramer of two alpha chains and two beta chains. As to expression, red blood cells.

In terms of biological role, involved in oxygen transport from the lung to the various peripheral tissues. This chain is Hemoglobin subunit beta (HBB), found in Anas platyrhynchos platyrhynchos (Northern mallard).